The primary structure comprises 143 residues: Large ribosomal subunit protein uL15 (143 aa).

The segment at 1 to 47 (MKLHELTPSEGSRFSRRRIGRGDSSGQGKTSGRGQKGQKARGKVRVG) is disordered. Residues 23–35 (DSSGQGKTSGRGQ) are compositionally biased toward gly residues.

The protein belongs to the universal ribosomal protein uL15 family. As to quaternary structure, part of the 50S ribosomal subunit.

Its function is as follows. Binds to the 23S rRNA. The sequence is that of Large ribosomal subunit protein uL15 from Lactiplantibacillus plantarum (strain ATCC BAA-793 / NCIMB 8826 / WCFS1) (Lactobacillus plantarum).